A 908-amino-acid polypeptide reads, in one-letter code: Autophagy-related protein 9 (908 aa).

Residues 1–216 (MADGVIARLM…SGMWCIVVER (216 aa)) lie on the Cytoplasmic side of the membrane. Residues 64-162 (SRATVDGRIP…IDQELQPPLH (99 aa)) are disordered. Residues 217-237 (VLHLIKVAFVAFLLTFLSQCV) traverse the membrane as a helical segment. The Lumenal segment spans residues 238–259 (DFKKIPSNQKLSQVLVPQCTRN). N259 is a glycosylation site (N-linked (GlcNAc...) asparagine). Residues 260–280 (MSGLWNIGLWLFAFYFMWKSI) form a helical membrane-spanning segment. The Cytoplasmic portion of the chain corresponds to 281 to 433 (QYILDLRRLT…GILSAKLRSR (153 aa)). The stretch at 434-454 (FIFAGVMILILSPFVAGYLII) is an intramembrane region. The Cytoplasmic portion of the chain corresponds to 455-525 (VYFLEYYNEI…KTSMVAKTVS (71 aa)). Residues 526–546 (FIAGSIATVLALISVFDPEMF) form a helical membrane-spanning segment. Topologically, residues 547–555 (LGFEITHDR) are lumenal. Residues 556–576 (TVLFYTAVFGAIWSVARGSVS) form a helical membrane-spanning segment. The Cytoplasmic portion of the chain corresponds to 577-622 (EDNAVFDPEYALGNVVEYTHYQPEHWKDRWHSADVKAEFEELYKLK). Residues 623–643 (LVIFIEEILSILTTPFVLFFS) lie within the membrane without spanning it. Over 644–908 (LPKSADQIID…HLNRRLGGVR (265 aa)) the chain is Cytoplasmic. Disordered regions lie at residues 751-779 (AASR…AVMA) and 809-878 (QFRG…DSVV). Residues 813 to 825 (GNQGDGHMMGGGS) are compositionally biased toward gly residues. Residues 839-852 (QTHDDESEDSRAGL) show a composition bias toward basic and acidic residues.

This sequence belongs to the ATG9 family. In terms of assembly, homotrimer; forms a homotrimer with a central pore that forms a path between the two membrane leaflets. In terms of processing, phosphorylated by apg-1. Apg-1 phosphorylation is required for preautophagosome elongation.

The protein resides in the preautophagosomal structure membrane. The protein localises to the cytoplasmic vesicle membrane. It is found in the golgi apparatus membrane. It localises to the endoplasmic reticulum membrane. The enzyme catalyses a 1,2-diacyl-sn-glycero-3-phosphocholine(in) = a 1,2-diacyl-sn-glycero-3-phosphocholine(out). The catalysed reaction is a 1,2-diacyl-sn-glycero-3-phospho-L-serine(in) = a 1,2-diacyl-sn-glycero-3-phospho-L-serine(out). It carries out the reaction a 1,2-diacyl-sn-glycero-3-phosphoethanolamine(in) = a 1,2-diacyl-sn-glycero-3-phosphoethanolamine(out). It catalyses the reaction a 1,2-diacyl-sn-glycero-3-phospho-(1D-myo-inositol-3-phosphate)(in) = a 1,2-diacyl-sn-glycero-3-phospho-(1D-myo-inositol-3-phosphate)(out). Its function is as follows. Phospholipid scramblase involved in autophagy and cytoplasm to vacuole transport (Cvt) vesicle formation. Cycles between the preautophagosomal structure/phagophore assembly site (PAS) and the cytoplasmic vesicle pool and supplies membrane for the growing autophagosome. Lipid scramblase activity plays a key role in preautophagosomal structure/phagophore assembly by distributing the phospholipids that arrive through atg-2 from the cytoplasmic to the luminal leaflet of the bilayer, thereby driving autophagosomal membrane expansion. Required for mitophagy. Also involved in endoplasmic reticulum-specific autophagic process and is essential for the survival of cells subjected to severe ER stress. Different machineries are required for anterograde trafficking to the PAS during either the Cvt pathway or bulk autophagy and for retrograde trafficking. In Neurospora crassa (strain ATCC 24698 / 74-OR23-1A / CBS 708.71 / DSM 1257 / FGSC 987), this protein is Autophagy-related protein 9 (apg-7).